Consider the following 243-residue polypeptide: Pleckstrin homology domain-containing family B member 1 (243 aa).

Residues 21-128 form the PH domain; that stretch reads ALVRGGWLWR…WKTALLEANS (108 aa).

In terms of assembly, homodimer. Interacts (via PH domain) with MYO1C. Interacts (via PH domain) with MYO7A. Binds transducins. As to expression, highly expressed in retina and brain. Levels are very low or not detectable in all other tissues tested.

It localises to the membrane. The protein resides in the cytoplasm. The chain is Pleckstrin homology domain-containing family B member 1 (PLEKHB1) from Homo sapiens (Human).